The sequence spans 118 residues: Large ribosomal subunit protein bL20 (118 aa).

Belongs to the bacterial ribosomal protein bL20 family.

Binds directly to 23S ribosomal RNA and is necessary for the in vitro assembly process of the 50S ribosomal subunit. It is not involved in the protein synthesizing functions of that subunit. In Thermosipho africanus (strain TCF52B), this protein is Large ribosomal subunit protein bL20.